A 465-amino-acid chain; its full sequence is BTB/POZ and MATH domain-containing protein 4 (465 aa).

Residues 12 to 40 are disordered; it reads LQRQNPLQKSEQQRRNFEMPSPPTTTSLS. Residues 46-180 enclose the MATH domain; that stretch reads NGSHSFTIKG…DDCLKINCTV (135 aa). The region spanning 216-282 is the BTB domain; it reads SDITFNVSGE…IYKDALIEDA (67 aa). 2 disordered regions span residues 395–429 and 441–465; these read SGGG…INGG and VNAN…ELED. The span at 442–458 shows a compositional bias: low complexity; the sequence is NANGSGRNNNDNNNSDD.

This sequence belongs to the Tdpoz family. In terms of assembly, interacts with RAP2-4. Binds to MYB56 at the promoter of FLOWERING LOCUS T (FT). As to expression, ubiquitous.

It is found in the cytoplasm. It functions in the pathway protein modification; protein ubiquitination. Functionally, may act as a substrate-specific adapter of an E3 ubiquitin-protein ligase complex (CUL3-RBX1-BTB) which mediates the ubiquitination and subsequent proteasomal degradation of target proteins. In Arabidopsis thaliana (Mouse-ear cress), this protein is BTB/POZ and MATH domain-containing protein 4 (BPM4).